A 153-amino-acid polypeptide reads, in one-letter code: Ribosomal RNA large subunit methyltransferase H (153 aa).

2 residues coordinate S-adenosyl-L-methionine: Leu71 and Gly102.

The protein belongs to the RNA methyltransferase RlmH family. As to quaternary structure, homodimer.

It localises to the cytoplasm. It carries out the reaction pseudouridine(1915) in 23S rRNA + S-adenosyl-L-methionine = N(3)-methylpseudouridine(1915) in 23S rRNA + S-adenosyl-L-homocysteine + H(+). Specifically methylates the pseudouridine at position 1915 (m3Psi1915) in 23S rRNA. This chain is Ribosomal RNA large subunit methyltransferase H, found in Anaeromyxobacter dehalogenans (strain 2CP-C).